The primary structure comprises 142 residues: Hemoglobin subunit zeta (142 aa).

The residue at position 2 (S2) is an N-acetylserine. A Globin domain is found at 2 to 142 (SLMKNERAII…LSSILTEKYR (141 aa)). T29 carries the phosphothreonine modification. S53 is modified (phosphoserine). H59 is a heme b binding site. Position 73 is a phosphoserine (S73). H88 provides a ligand contact to heme b.

It belongs to the globin family. Heterotetramer of two zeta chains and beta-type chains.

Its function is as follows. The zeta chain is an alpha-type chain of mammalian embryonic hemoglobin. In Mus musculus (Mouse), this protein is Hemoglobin subunit zeta (Hbz).